A 377-amino-acid chain; its full sequence is Succinyl-diaminopimelate desuccinylase (377 aa).

H67 contacts Zn(2+). D69 is a catalytic residue. Zn(2+) is bound at residue D100. E134 functions as the Proton acceptor in the catalytic mechanism. 3 residues coordinate Zn(2+): E135, E163, and H349.

It belongs to the peptidase M20A family. DapE subfamily. As to quaternary structure, homodimer. It depends on Zn(2+) as a cofactor. Co(2+) is required as a cofactor.

It carries out the reaction N-succinyl-(2S,6S)-2,6-diaminopimelate + H2O = (2S,6S)-2,6-diaminopimelate + succinate. The protein operates within amino-acid biosynthesis; L-lysine biosynthesis via DAP pathway; LL-2,6-diaminopimelate from (S)-tetrahydrodipicolinate (succinylase route): step 3/3. Functionally, catalyzes the hydrolysis of N-succinyl-L,L-diaminopimelic acid (SDAP), forming succinate and LL-2,6-diaminopimelate (DAP), an intermediate involved in the bacterial biosynthesis of lysine and meso-diaminopimelic acid, an essential component of bacterial cell walls. The chain is Succinyl-diaminopimelate desuccinylase from Dechloromonas aromatica (strain RCB).